The chain runs to 211 residues: Protein-L-isoaspartate O-methyltransferase 2 (211 aa).

The active site involves serine 60.

This sequence belongs to the methyltransferase superfamily. L-isoaspartyl/D-aspartyl protein methyltransferase family.

The protein resides in the cytoplasm. The enzyme catalyses [protein]-L-isoaspartate + S-adenosyl-L-methionine = [protein]-L-isoaspartate alpha-methyl ester + S-adenosyl-L-homocysteine. Its function is as follows. Catalyzes the methyl esterification of L-isoaspartyl residues in peptides and proteins that result from spontaneous decomposition of normal L-aspartyl and L-asparaginyl residues. It plays a role in the repair and/or degradation of damaged proteins. This Nitrosospira multiformis (strain ATCC 25196 / NCIMB 11849 / C 71) protein is Protein-L-isoaspartate O-methyltransferase 2.